Consider the following 288-residue polypeptide: Pirin-like protein CC_3178 (288 aa).

This sequence belongs to the pirin family.

This is Pirin-like protein CC_3178 from Caulobacter vibrioides (strain ATCC 19089 / CIP 103742 / CB 15) (Caulobacter crescentus).